Reading from the N-terminus, the 185-residue chain is Ribosome-recycling factor (185 aa).

This sequence belongs to the RRF family.

It is found in the cytoplasm. Functionally, responsible for the release of ribosomes from messenger RNA at the termination of protein biosynthesis. May increase the efficiency of translation by recycling ribosomes from one round of translation to another. This chain is Ribosome-recycling factor, found in Corynebacterium jeikeium (strain K411).